The following is a 66-amino-acid chain: DNA gyrase inhibitor YacG (66 aa).

Zn(2+)-binding residues include Cys-9, Cys-12, Cys-28, and Cys-32.

Belongs to the DNA gyrase inhibitor YacG family. As to quaternary structure, interacts with GyrB. It depends on Zn(2+) as a cofactor.

Its function is as follows. Inhibits all the catalytic activities of DNA gyrase by preventing its interaction with DNA. Acts by binding directly to the C-terminal domain of GyrB, which probably disrupts DNA binding by the gyrase. The sequence is that of DNA gyrase inhibitor YacG from Pseudomonas fluorescens (strain Pf0-1).